We begin with the raw amino-acid sequence, 648 residues long: Threonine--tRNA ligase (648 aa).

Residues 1–63 (MAQISLTFPD…TQDAAIAIHT (63 aa)) form the TGS domain. The segment at 247–544 (DHRKLGREMN…LIEEHAGKLP (298 aa)) is catalytic. Residues Cys344, His395, and His521 each coordinate Zn(2+).

Belongs to the class-II aminoacyl-tRNA synthetase family. Homodimer. The cofactor is Zn(2+).

Its subcellular location is the cytoplasm. It catalyses the reaction tRNA(Thr) + L-threonine + ATP = L-threonyl-tRNA(Thr) + AMP + diphosphate + H(+). In terms of biological role, catalyzes the attachment of threonine to tRNA(Thr) in a two-step reaction: L-threonine is first activated by ATP to form Thr-AMP and then transferred to the acceptor end of tRNA(Thr). Also edits incorrectly charged L-seryl-tRNA(Thr). The chain is Threonine--tRNA ligase from Ruegeria sp. (strain TM1040) (Silicibacter sp.).